The primary structure comprises 199 residues: Superoxide dismutase [Fe] (199 aa).

Fe cation contacts are provided by His27, His74, Asp158, and His162.

It belongs to the iron/manganese superoxide dismutase family. In terms of assembly, homodimer. Fe cation is required as a cofactor.

It catalyses the reaction 2 superoxide + 2 H(+) = H2O2 + O2. Functionally, destroys superoxide anion radicals which are normally produced within the cells and which are toxic to biological systems. The polypeptide is Superoxide dismutase [Fe] (SODB) (Babesia bovis).